The following is a 281-amino-acid chain: Carbonic anhydrase (281 aa).

Zn(2+) is bound by residues cysteine 106, histidine 161, and cysteine 164.

The protein belongs to the beta-class carbonic anhydrase family. Zn(2+) serves as cofactor.

The protein localises to the cytoplasm. Its subcellular location is the nucleus. It localises to the mitochondrion intermembrane space. It catalyses the reaction hydrogencarbonate + H(+) = CO2 + H2O. Its activity is regulated as follows. Amines and amino acids act as activators of catalytic activity, whereas natural product-based phenols, dithiocarbamates, aliphatic and aromatic carboxylates, boronic acids, and sulfonamides act as inhibitors of enzymatic activity. Also inhibited by anions such as cyanide and carbonate, and to a lesser extent by sulfate, phenylboronic, and phenyl arsonic acid. Functionally, catalyzes the reversible hydration of CO(2) to H(2)CO(3). The main role may be to provide inorganic carbon for the bicarbonate-dependent carboxylation reactions catalyzed by pyruvate carboxylase, acetyl-CoA carboxylase and carbamoyl-phosphate synthetase. Involved in protection against oxidative damage. Acts as a CO(2) chemosensor and induces CO(2)-mediated filamentation. Essential for pathological growth in niches where sufficient CO(2) is not supplied by the host. Necessary for white-to-opaque switching at low CO(2) concentrations. The protein is Carbonic anhydrase (NCE103) of Candida albicans (strain SC5314 / ATCC MYA-2876) (Yeast).